The primary structure comprises 176 residues: ATP-dependent protease subunit HslV (176 aa).

Residue threonine 2 is part of the active site. Glycine 157, cysteine 160, and threonine 163 together coordinate Na(+).

This sequence belongs to the peptidase T1B family. HslV subfamily. As to quaternary structure, a double ring-shaped homohexamer of HslV is capped on each side by a ring-shaped HslU homohexamer. The assembly of the HslU/HslV complex is dependent on binding of ATP.

It is found in the cytoplasm. It catalyses the reaction ATP-dependent cleavage of peptide bonds with broad specificity.. With respect to regulation, allosterically activated by HslU binding. Functionally, protease subunit of a proteasome-like degradation complex believed to be a general protein degrading machinery. The polypeptide is ATP-dependent protease subunit HslV (Pseudomonas syringae pv. tomato (strain ATCC BAA-871 / DC3000)).